The chain runs to 132 residues: Small ribosomal subunit protein uS8 (132 aa).

It belongs to the universal ribosomal protein uS8 family. As to quaternary structure, part of the 30S ribosomal subunit. Contacts proteins S5 and S12.

Its function is as follows. One of the primary rRNA binding proteins, it binds directly to 16S rRNA central domain where it helps coordinate assembly of the platform of the 30S subunit. This chain is Small ribosomal subunit protein uS8, found in Psychrobacter sp. (strain PRwf-1).